The sequence spans 224 residues: Ribose-5-phosphate isomerase A (224 aa).

Substrate-binding positions include 32 to 35 (TGST), 85 to 88 (DGAD), and 98 to 101 (KGGG). The active-site Proton acceptor is the Glu-107. Residue Lys-125 coordinates substrate.

The protein belongs to the ribose 5-phosphate isomerase family. As to quaternary structure, homodimer.

It catalyses the reaction aldehydo-D-ribose 5-phosphate = D-ribulose 5-phosphate. Its pathway is carbohydrate degradation; pentose phosphate pathway; D-ribose 5-phosphate from D-ribulose 5-phosphate (non-oxidative stage): step 1/1. Functionally, catalyzes the reversible conversion of ribose-5-phosphate to ribulose 5-phosphate. The chain is Ribose-5-phosphate isomerase A from Pseudomonas putida (strain W619).